Consider the following 172-residue polypeptide: Ribosome maturation factor RimM (172 aa).

The PRC barrel domain maps to 96–168 (DGEFYYHEII…RVDVEIPEGL (73 aa)).

It belongs to the RimM family. As to quaternary structure, binds ribosomal protein uS19.

The protein resides in the cytoplasm. Its function is as follows. An accessory protein needed during the final step in the assembly of 30S ribosomal subunit, possibly for assembly of the head region. Essential for efficient processing of 16S rRNA. May be needed both before and after RbfA during the maturation of 16S rRNA. It has affinity for free ribosomal 30S subunits but not for 70S ribosomes. The chain is Ribosome maturation factor RimM from Streptococcus sanguinis (strain SK36).